A 390-amino-acid polypeptide reads, in one-letter code: MEMNQKTAFMGINIKDEGPSNVMIIKALNSSSSLLDIPSFMKVAGIEFDPIMFNHFWQVLVDNGDRLPHVGETTLNWLGYEGVFTKQKEKFINMLKRNQISFKELSYQDNEIQLYPSIQKEMLLLPNESAKTKSKWLLMNPDDFKMAIMGLKTKNSEKIKRYYVTLEKTMKLHSEYALYFHDRKAQEEKERERQRAEDEKRSILGEMSEMRQYMQKMGITLEDTREEVKKVNIQNKDIKAQNEEIKAQNEDLAFDLSDVRDRLIEAAEDRSPKLETKPLRERFVIIKRKDSSFPYYAIRGQDVYVKGRLTHFKNTRYPELKIIFDTNYQPNPRNLYIRFKELKDERFIIAGNNIKTVDSSNKLEKEMLELFEKLNEEKHNIYFFFNFNDF.

Positions 181–263 (HDRKAQEEKE…FDLSDVRDRL (83 aa)) form a coiled coil.

This Acheta domesticus (House cricket) protein is Putative MSV199 domain-containing protein 211L.